We begin with the raw amino-acid sequence, 78 residues long: Small ribosomal subunit protein bS16c (78 aa).

The protein belongs to the bacterial ribosomal protein bS16 family.

It is found in the plastid. The protein localises to the chloroplast. This is Small ribosomal subunit protein bS16c from Adiantum capillus-veneris (Maidenhair fern).